Here is a 558-residue protein sequence, read N- to C-terminus: Undecaprenyl phosphate-alpha-4-amino-4-deoxy-L-arabinose arabinosyl transferase 1 (558 aa).

The next 12 helical transmembrane spans lie at 4 to 24 (GAGLWLGLLAVFFVLTYLVPL), 87 to 107 (FASVFSTGLSALLVFTVSWTV), 115 to 135 (LLAALIFLSLLLVFGVGTYSV), 136 to 156 (LDPMIALWLNAAMAAHVFALR), 178 to 198 (FMTKGFLALVVPAIAVLPVAL), 207 to 227 (LGYGALAALLAVLVNLPWALA), 257 to 277 (APFWFYLPVLALGSLPWLGLL), 295 to 315 (FLLLCWVVMPLLFFSVAKGKL), 316 to 336 (LTYILPCMAPLALLLAAYGRE), 355 to 375 (AFALCAIVALLLAGSGLLPWA), 383 to 403 (WPRIVIGTLVFAGWLCFAAVS), and 411 to 431 (WALAAFCPLLLSLLVGQIIPQ).

It belongs to the glycosyltransferase 83 family.

It localises to the cell inner membrane. The enzyme catalyses 4-amino-4-deoxy-alpha-L-arabinopyranosyl di-trans,octa-cis-undecaprenyl phosphate + lipid IVA = lipid IIA + di-trans,octa-cis-undecaprenyl phosphate.. It participates in lipopolysaccharide metabolism; 4-amino-4-deoxy-beta-L-arabinose-lipid A biosynthesis. Its function is as follows. Catalyzes the transfer of the L-Ara4N moiety of the glycolipid undecaprenyl phosphate-alpha-L-Ara4N to lipid A. The modified arabinose is attached to lipid A and is required for resistance to polymyxin and cationic antimicrobial peptides. The protein is Undecaprenyl phosphate-alpha-4-amino-4-deoxy-L-arabinose arabinosyl transferase 1 of Sodalis glossinidius (strain morsitans).